Here is a 1123-residue protein sequence, read N- to C-terminus: RNA-binding protein 6 (1123 aa).

Disordered regions lie at residues 1 to 391 (MWGD…EGGL) and 413 to 454 (LPGS…EEKP). Residue S17 is modified to Phosphoserine. Residue K36 forms a Glycyl lysine isopeptide (Lys-Gly) (interchain with G-Cter in SUMO2) linkage. Positions 79–97 (DGPHGDYRGGEGPGHDFRG) are enriched in basic and acidic residues. The segment covering 98 to 114 (GDFSSSDFQSRDSSQLD) has biased composition (low complexity). 2 stretches are compositionally biased toward basic and acidic residues: residues 115-131 (FRGR…REGP) and 145-237 (YRGR…DFRG). S240 carries the post-translational modification Phosphoserine. Composition is skewed to basic and acidic residues over residues 245–286 (LDFR…REMP) and 301–323 (QDRE…HTIE). A Glycyl lysine isopeptide (Lys-Gly) (interchain with G-Cter in SUMO2) cross-link involves residue K331. The segment covering 332–354 (GEFEHSETREGETQGVAFEHESP) has biased composition (basic and acidic residues). T344 carries the post-translational modification Phosphothreonine. Residues 356–365 (DFQNSQSPVQ) are compositionally biased toward polar residues. S360 and S362 each carry phosphoserine. Composition is skewed to basic and acidic residues over residues 366–391 (DQDK…EGGL) and 431–454 (KTAR…EEKP). Glycyl lysine isopeptide (Lys-Gly) (interchain with G-Cter in SUMO2) cross-links involve residues K386, K453, K469, and K569. Residues 456-536 (RLIRLSGVPE…KEVTLEYVSS (81 aa)) enclose the RRM domain. Disordered regions lie at residues 574 to 654 (TYPQ…QDGE), 741 to 787 (KRRN…QSSS), and 827 to 948 (EEEI…EEDK). 2 stretches are compositionally biased toward basic and acidic residues: residues 597 to 654 (PADK…QDGE) and 742 to 754 (RRND…DHMH). Residues 772 to 787 (SDWSSDTNRQGQQSSS) show a composition bias toward polar residues. Over residues 843–860 (SKKEMSKRDGKEKKDRGV) the composition is skewed to basic and acidic residues. Residues K871, K879, and K887 each participate in a glycyl lysine isopeptide (Lys-Gly) (interchain with G-Cter in SUMO2) cross-link. S891 carries the post-translational modification Phosphoserine. The segment covering 910–922 (GDSDYEEEEEEEQ) has biased composition (acidic residues). A compositionally biased stretch (basic and acidic residues) spans 934 to 948 (QKREEQTKKENEEDK). Glycyl lysine isopeptide (Lys-Gly) (interchain with G-Cter in SUMO2) cross-links involve residues K935, K948, K991, and K1019. The span at 1004–1051 (EREGKFKGRGNDRREKLQSFDSPERKRIKYSRETDSDRKLVDKEDIDT) shows a compositional bias: basic and acidic residues. Positions 1004-1106 (EREGKFKGRG…RTSKRQSNET (103 aa)) are disordered. S1022 and S1025 each carry phosphoserine. Residues K1042, K1046, and K1066 each participate in a glycyl lysine isopeptide (Lys-Gly) (interchain with G-Cter in SUMO2) cross-link. Positions 1051–1097 (TSSKGGCVQQATGWRKGTGLGYGHPGLASSEEAEGRMRGPSVGASGR) constitute a G-patch domain.

May interact with FAM168B. Ubiquitous in adults.

It is found in the nucleus. In terms of biological role, specifically binds poly(G) RNA homopolymers in vitro. This is RNA-binding protein 6 (RBM6) from Homo sapiens (Human).